The primary structure comprises 417 residues: COP9 signalosome complex subunit 7a (417 aa).

Positions 2–179 (EQTKALNALE…EMVQINSVAA (178 aa)) constitute a PCI domain. Positions 240 to 417 (DEQKGAVPSS…KRGSKRKLTA (178 aa)) are disordered. A compositionally biased stretch (gly residues) spans 263–290 (RGGGGGGDGAGAGGSFRGSGYSRGGGLS). Composition is skewed to low complexity over residues 291–311 (QGYRSSQRGSHQQHQNQSRQQ), 320–330 (SNQSGTNSLLT), and 343–352 (PSAVSPSAAA). The span at 367-379 (METGSGSGSGPLG) shows a compositional bias: gly residues. Residues 385–405 (DMDDSEEDIDDDTMDLDDEGD) are compositionally biased toward acidic residues.

Belongs to the CSN7/EIF3M family. CSN7 subfamily. In terms of assembly, component of the COP9 signalosome (CSN) complex.

The protein resides in the cytoplasm. It is found in the nucleus. Its function is as follows. Component of the COP9 signalosome (CSN) complex that acts as an regulator of the ubiquitin (Ubl) conjugation pathway by mediating the deneddylation of the cullin subunit of SCF-type E3 ubiquitin-protein ligase complexes. The CSN complex is involved in the regulation of the circadian clock through its control of the stability of the SCF(FWD1) complex. The polypeptide is COP9 signalosome complex subunit 7a (csn-7a) (Neurospora crassa (strain ATCC 24698 / 74-OR23-1A / CBS 708.71 / DSM 1257 / FGSC 987)).